A 181-amino-acid polypeptide reads, in one-letter code: TATA-box-binding protein (181 aa).

Tandem repeats lie at residues 7 to 83 (IVNV…IKEL) and 98 to 173 (VQNM…LTTL).

This sequence belongs to the TBP family.

In terms of biological role, general factor that plays a role in the activation of archaeal genes transcribed by RNA polymerase. Binds specifically to the TATA box promoter element which lies close to the position of transcription initiation. This chain is TATA-box-binding protein, found in Methanococcus maripaludis (strain C7 / ATCC BAA-1331).